The primary structure comprises 405 residues: Argininosuccinate synthase (405 aa).

Residues 10 to 18 and Ala37 each bind ATP; that span reads AYSGGLDTS. L-citrulline-binding residues include Tyr88 and Ser93. Gly118 is a binding site for ATP. L-aspartate contacts are provided by Thr120, Asn124, and Asp125. L-citrulline is bound at residue Asn124. Residues Arg128, Ser179, Ser188, Glu264, and Tyr276 each coordinate L-citrulline.

It belongs to the argininosuccinate synthase family. Type 1 subfamily. Homotetramer.

It is found in the cytoplasm. The enzyme catalyses L-citrulline + L-aspartate + ATP = 2-(N(omega)-L-arginino)succinate + AMP + diphosphate + H(+). It functions in the pathway amino-acid biosynthesis; L-arginine biosynthesis; L-arginine from L-ornithine and carbamoyl phosphate: step 2/3. This Pseudomonas fluorescens (strain ATCC BAA-477 / NRRL B-23932 / Pf-5) protein is Argininosuccinate synthase.